Consider the following 149-residue polypeptide: Large ribosomal subunit protein bL9 (149 aa).

Belongs to the bacterial ribosomal protein bL9 family.

In terms of biological role, binds to the 23S rRNA. The sequence is that of Large ribosomal subunit protein bL9 from Haemophilus influenzae (strain PittGG).